We begin with the raw amino-acid sequence, 443 residues long: MDDLVLARSLFGTTMGFHIIFATLGVGLPLMILVAELIYQKTKDDHYAIMAKRWTKAQAVLLGVAIPTGTIAGTQLALLWPGFMEVIGRVMSLPFQIEIYAFFVEALFMSIYVYAADRLSPAMRIVAVFFVLVGAAASAVLITNVHAFEGTPAGFKILNGKITDVDPWAAFFNPSFFITAGHVVLSAFMTGAFIVASVAAYKMIRTRKKERVYRFHRKALLLALTIGGIFSLLTALNGHESAQMLYEYQPEKLAGAEGLFETRSHAPLAIGGFTDPNEEKVKWAIEIPWALSFLAANRFDTVVKGLNAFPRDEWPPLFIHTLFNAMVGVGMLLILYSIIGVVWRKVLKKDRFPTWLLIIFMTAGPFSLIGIEFGWIFACTGRQPWVIYHLLKTSDVVTTTGSIGVLFLFFTFVYAVLGAAVVYVLLYYFRKHPVDEDLNTAES.

Transmembrane regions (helical) follow at residues 19-39, 60-80, 93-113, 125-145, 176-196, 219-239, 322-342, 357-377, and 405-425; these read IIFA…ELIY, VLLG…ALLW, LPFQ…SIYV, IVAV…ITNV, FFIT…FIVA, ALLL…LNGH, LFNA…IGVV, LIIF…GWIF, and VLFL…VYVL. His182 is a binding site for heme b.

Belongs to the cytochrome ubiquinol oxidase subunit 1 family. Requires heme b as cofactor.

The protein localises to the cell membrane. Its function is as follows. May have a role in sporulation. Can compensate for the loss of cytochrome aa3. This chain is Putative cytochrome bd menaquinol oxidase subunit I (ythA), found in Bacillus subtilis (strain 168).